Reading from the N-terminus, the 372-residue chain is MPLINMPDFAGALLDDFAARGAARVDTPVIQPAEPFLDMAGEDLRRRIFLTESETGESLCLRPEFTIPVCLSHIENATGTPKRYAYLGEVFRQRREGGNEFYQAGIEDLGEPATARADARAINDAIGILHKLLPGRPLTVMLGDQAVFEAVVKTLGLPSGWQRRLIQAFGDSTHLDQLLKTLASPQTAHGLDPAVEALLSSGDEAGLIAHLDRTMEDTGYSTNASRSPREIAARLKEKLALAETRLDGAALLLLREFLSLELPLSEATAALAGFADAAGLSLGAALDGFEARIAALADLGVDLSRITYRAAFGRPLDYYTGLVFEVALSGETAVLAGGGRFDRLLTLLGAKHTIPAVGFSLWLDRIELARAR.

The protein belongs to the class-II aminoacyl-tRNA synthetase family. HisZ subfamily. Heteromultimer composed of HisG and HisZ subunits.

It localises to the cytoplasm. Its pathway is amino-acid biosynthesis; L-histidine biosynthesis; L-histidine from 5-phospho-alpha-D-ribose 1-diphosphate: step 1/9. Its function is as follows. Required for the first step of histidine biosynthesis. May allow the feedback regulation of ATP phosphoribosyltransferase activity by histidine. In Allorhizobium ampelinum (strain ATCC BAA-846 / DSM 112012 / S4) (Agrobacterium vitis (strain S4)), this protein is ATP phosphoribosyltransferase regulatory subunit.